We begin with the raw amino-acid sequence, 239 residues long: Transmembrane ascorbate ferrireductase 1 (239 aa).

The Cytoplasmic segment spans residues 1-7; that stretch reads MAVRINA. The chain crosses the membrane as a helical span at residues 8–28; sequence MAVTFVAHALAVIAAIMVLVW. The Cytochrome b561 domain occupies 13-216; it reads VAHALAVIAA…FGAFVVLTAS (204 aa). Topologically, residues 29–45 are lumenal; sequence SISYRGGLAWEATNKNL. The chain crosses the membrane as a helical span at residues 46–66; the sequence is IFNLHPVLMLIGFIILGGEAI. Position 50 (histidine 50) interacts with heme b. Residues 67–81 are Cytoplasmic-facing; the sequence is ISYKSLPLEKPVKKL. Residues 82-102 form a helical membrane-spanning segment; that stretch reads IHLILHAIALALGIFGICAAF. 2 residues coordinate heme b: histidine 83 and histidine 117. Over 103–119 the chain is Lumenal; that stretch reads KNHNESHIPNLYSLHSW. A helical transmembrane segment spans residues 120–140; it reads IGIGVISLYGFQWVYSFIVFF. Topologically, residues 141–155 are cytoplasmic; it reads FPGGSTNLKSGLLPW. Histidine 156 contacts heme b. A helical membrane pass occupies residues 156–176; that stretch reads HAMLGLFVYILAVGNAALGFL. Residues 177-193 lie on the Lumenal side of the membrane; it reads EKLTFLENGGLDKYGSE. The chain crosses the membrane as a helical span at residues 194–214; it reads AFLINFTAIITILFGAFVVLT. The Cytoplasmic portion of the chain corresponds to 215-239; that stretch reads ASAESPSPSPSVSNDDSVDFSYSAI. Positions 217–239 are disordered; the sequence is AESPSPSPSVSNDDSVDFSYSAI. Residues 224-239 show a composition bias toward low complexity; that stretch reads PSVSNDDSVDFSYSAI.

In terms of assembly, homodimer. Requires heme b as cofactor. Expressed in roots, seedlings and leaves. Lower expression in flowers. Expressed in the L1 layer of the shoot apex, in the epidermis of leaf primordia and young leaves and in vascular bundles. In the differentiation zone of the root, detected in the pericycle and in the epidermis, but not in the cortex. Strongly expressed in the lateral part of the root cap and in the epidermis of the root tip, but not in the meristematic tissue. Not expressed in lateral roots. In mature embryos, expressed in the epidermis, cotyledon tips and root tips.

It is found in the vacuole membrane. The catalysed reaction is Fe(3+)(out) + L-ascorbate(in) = monodehydro-L-ascorbate radical(in) + Fe(2+)(out) + H(+). Functionally, two-heme-containing cytochrome. Catalyzes ascorbate-dependent trans-membrane ferric-chelate reduction. Able to use dihydrolipoic acid (DHLA) as an alternative substrate to ascorbate. The polypeptide is Transmembrane ascorbate ferrireductase 1 (CYB561A) (Arabidopsis thaliana (Mouse-ear cress)).